The chain runs to 288 residues: Pantothenate synthetase (288 aa).

31–38 (MGNLHRGH) provides a ligand contact to ATP. H38 acts as the Proton donor in catalysis. A (R)-pantoate-binding site is contributed by Q62. Q62 lines the beta-alanine pocket. 150–153 (GQKD) serves as a coordination point for ATP. Q156 serves as a coordination point for (R)-pantoate. ATP-binding positions include I179 and 187 to 190 (LSSR).

This sequence belongs to the pantothenate synthetase family. Homodimer.

Its subcellular location is the cytoplasm. It catalyses the reaction (R)-pantoate + beta-alanine + ATP = (R)-pantothenate + AMP + diphosphate + H(+). It functions in the pathway cofactor biosynthesis; (R)-pantothenate biosynthesis; (R)-pantothenate from (R)-pantoate and beta-alanine: step 1/1. Functionally, catalyzes the condensation of pantoate with beta-alanine in an ATP-dependent reaction via a pantoyl-adenylate intermediate. The protein is Pantothenate synthetase of Wigglesworthia glossinidia brevipalpis.